The chain runs to 405 residues: Low-salt glycan biosynthesis sulfotransferase Agl7 (405 aa).

Positions 24, 201, and 202 each coordinate Ca(2+).

The protein belongs to the sulfatase family. Requires Ca(2+) as cofactor.

It functions in the pathway protein modification; protein glycosylation. The protein operates within cell surface structure biogenesis; S-layer biogenesis. Functionally, involved in N-glycan biosynthetic pathway that takes place under low-salt conditions (1.75 M instead of 3.4 M). Participates in the formation of the tetrasaccharide present at 'Asn-532' of S-layer glycoprotein Csg, consisting of a sulfated hexose, 2 hexoses and rhamnose. Mediates sulfation of sugar 1 in the tetrasaccharide. This Haloferax volcanii (strain ATCC 29605 / DSM 3757 / JCM 8879 / NBRC 14742 / NCIMB 2012 / VKM B-1768 / DS2) (Halobacterium volcanii) protein is Low-salt glycan biosynthesis sulfotransferase Agl7.